Consider the following 108-residue polypeptide: Peptidyl-prolyl cis-trans isomerase FKBP1B (108 aa).

In terms of domain architecture, PPIase FKBP-type spans 20 to 108; sequence GQICVVHYTG…IFDVELLSLE (89 aa).

This sequence belongs to the FKBP-type PPIase family. FKBP1 subfamily. Identified in a complex composed of RYR2, FKBP1B, PKA catalytic subunit, PRKAR2A, AKAP6, and the protein phosphatases PP2A and PP1. Interacts directly with RYR2.

It localises to the cytoplasm. It is found in the sarcoplasmic reticulum. The enzyme catalyses [protein]-peptidylproline (omega=180) = [protein]-peptidylproline (omega=0). Inhibited by both FK506 and rapamycin. Its function is as follows. Has the potential to contribute to the immunosuppressive and toxic effects of FK506 and rapamycin. PPIases accelerate the folding of proteins. It catalyzes the cis-trans isomerization of proline imidic peptide bonds in oligopeptides. This Mus musculus (Mouse) protein is Peptidyl-prolyl cis-trans isomerase FKBP1B (Fkbp1b).